A 778-amino-acid chain; its full sequence is Endonuclease MutS2 (778 aa).

ATP is bound at residue 328–335; it reads GPNTGGKT. Positions 702–777 constitute a Smr domain; the sequence is LDLRGKRYEE…GSGATIVTFK (76 aa).

It belongs to the DNA mismatch repair MutS family. MutS2 subfamily. In terms of assembly, homodimer. Binds to stalled ribosomes, contacting rRNA.

In terms of biological role, endonuclease that is involved in the suppression of homologous recombination and thus may have a key role in the control of bacterial genetic diversity. Functionally, acts as a ribosome collision sensor, splitting the ribosome into its 2 subunits. Detects stalled/collided 70S ribosomes which it binds and splits by an ATP-hydrolysis driven conformational change. Acts upstream of the ribosome quality control system (RQC), a ribosome-associated complex that mediates the extraction of incompletely synthesized nascent chains from stalled ribosomes and their subsequent degradation. Probably generates substrates for RQC. The chain is Endonuclease MutS2 from Streptococcus pneumoniae (strain JJA).